A 352-amino-acid polypeptide reads, in one-letter code: Photosystem II D2 protein (352 aa).

T2 carries the post-translational modification N-acetylthreonine. Phosphothreonine is present on T2. The chain crosses the membrane as a helical span at residues 40-60 (TAYLALGGWLTGTTFVTSWYT). H117 serves as a coordination point for chlorophyll a. The helical transmembrane segment at 124–140 (GFMLRQFEIARSVKLRP) threads the bilayer. Pheophytin a is bound by residues Q129 and N142. The helical transmembrane segment at 152–165 (VFVSVFLIYPLGQS) threads the bilayer. H197 contacts chlorophyll a. Residues 207–227 (AALLCAIHGATVENTLFEDGD) form a helical membrane-spanning segment. Positions 214 and 261 each coordinate a plastoquinone. H214 is a Fe cation binding site. H268 serves as a coordination point for Fe cation. Residues 278–294 (GLWMSALGVVGLALNLR) form a helical membrane-spanning segment.

It belongs to the reaction center PufL/M/PsbA/D family. In terms of assembly, PSII is composed of 1 copy each of membrane proteins PsbA, PsbB, PsbC, PsbD, PsbE, PsbF, PsbH, PsbI, PsbJ, PsbK, PsbL, PsbM, PsbT, PsbX, PsbY, PsbZ, Psb30/Ycf12, at least 3 peripheral proteins of the oxygen-evolving complex and a large number of cofactors. It forms dimeric complexes. The cofactor is The D1/D2 heterodimer binds P680, chlorophylls that are the primary electron donor of PSII, and subsequent electron acceptors. It shares a non-heme iron and each subunit binds pheophytin, quinone, additional chlorophylls, carotenoids and lipids. There is also a Cl(-1) ion associated with D1 and D2, which is required for oxygen evolution. The PSII complex binds additional chlorophylls, carotenoids and specific lipids..

Its subcellular location is the plastid. It is found in the chloroplast thylakoid membrane. The enzyme catalyses 2 a plastoquinone + 4 hnu + 2 H2O = 2 a plastoquinol + O2. Functionally, photosystem II (PSII) is a light-driven water:plastoquinone oxidoreductase that uses light energy to abstract electrons from H(2)O, generating O(2) and a proton gradient subsequently used for ATP formation. It consists of a core antenna complex that captures photons, and an electron transfer chain that converts photonic excitation into a charge separation. The D1/D2 (PsbA/PsbD) reaction center heterodimer binds P680, the primary electron donor of PSII as well as several subsequent electron acceptors. D2 is needed for assembly of a stable PSII complex. The sequence is that of Photosystem II D2 protein from Pleurastrum terricola (Filamentous green alga).